Consider the following 134-residue polypeptide: Small ribosomal subunit protein uS8c (134 aa).

It belongs to the universal ribosomal protein uS8 family. In terms of assembly, part of the 30S ribosomal subunit.

The protein localises to the plastid. In terms of biological role, one of the primary rRNA binding proteins, it binds directly to 16S rRNA central domain where it helps coordinate assembly of the platform of the 30S subunit. The polypeptide is Small ribosomal subunit protein uS8c (rps8) (Cuscuta gronovii (Common dodder)).